Reading from the N-terminus, the 377-residue chain is Trans-enoyl reductase FMN2 (377 aa).

The Enoyl reductase (ER) domain occupies 7–370; sequence NASGGYCLNS…DGVIRGKKLV (364 aa). The interval 143–173 is disordered; it reads LSDMTGNGRSNGYTNGHTNGHTNGHSKGEEE. Polar residues predominate over residues 144 to 155; it reads SDMTGNGRSNGY. Residues 156 to 167 are compositionally biased toward low complexity; sequence TNGHTNGHTNGH. Residues 186–189, 209–212, Tyr-227, and 274–275 contribute to the NADP(+) site; these read ASAS, SPAN, and LD.

This sequence belongs to the zinc-containing alcohol dehydrogenase family.

Its pathway is secondary metabolite biosynthesis. Its function is as follows. Trans-enoyl reductase; part of the gene cluster that mediates the biosynthesis of fusamarins, isocoumarin derivatives that show moderate cytotoxicity with IC(50) values between 1 and 50 uM. The polyketide synthase FMN1 probably synthesizes two different polyketides, a tetra- and a pentaketide, containinga varying number of double bonds depending on the selective actions of the trans-enoyl reductase FMN2. Chain fusion will presumably be mediated by the KS domain before finally offloading is catalyzed by the alpha/beta hydrolase fold enzyme FMN3. The chain is Trans-enoyl reductase FMN2 from Fusarium mangiferae (Mango malformation disease fungus).